Consider the following 419-residue polypeptide: UDP-N-acetylglucosamine 1-carboxyvinyltransferase (419 aa).

22–23 contributes to the phosphoenolpyruvate binding site; it reads KN. Position 93 (R93) interacts with UDP-N-acetyl-alpha-D-glucosamine. The Proton donor role is filled by C117. Position 117 is a 2-(S-cysteinyl)pyruvic acid O-phosphothioketal (C117). Residues D306 and V328 each coordinate UDP-N-acetyl-alpha-D-glucosamine.

It belongs to the EPSP synthase family. MurA subfamily.

It is found in the cytoplasm. It catalyses the reaction phosphoenolpyruvate + UDP-N-acetyl-alpha-D-glucosamine = UDP-N-acetyl-3-O-(1-carboxyvinyl)-alpha-D-glucosamine + phosphate. Its pathway is cell wall biogenesis; peptidoglycan biosynthesis. Functionally, cell wall formation. Adds enolpyruvyl to UDP-N-acetylglucosamine. In Thioalkalivibrio sulfidiphilus (strain HL-EbGR7), this protein is UDP-N-acetylglucosamine 1-carboxyvinyltransferase.